Here is a 1269-residue protein sequence, read N- to C-terminus: Furin-like protease 1, isoforms 1/1-X/2 (1269 aa).

The tract at residues 1–57 is disordered; sequence MKNDVVRWSRQPTSNTTNSSSSSRSDSNSTHKHRSKSNKLNARQLGSNAARSCQQRS. The span at 13-28 shows a compositional bias: low complexity; that stretch reads TSNTTNSSSSSRSDSN. 3 N-linked (GlcNAc...) asparagine glycosylation sites follow: Asn-15, Asn-18, and Asn-28. Positions 38 to 57 are enriched in polar residues; sequence NKLNARQLGSNAARSCQQRS. Asn-108 carries an N-linked (GlcNAc...) asparagine glycan. A helical transmembrane segment spans residues 119-139; sequence VFLLALQFSAVVFLCNINVGF. A compositionally biased stretch (low complexity) spans 150–163; sequence SAGGSSPAAPSSAP. The interval 150–187 is disordered; the sequence is SAGGSSPAAPSSAPSSPPTVAVPPPPPPSSALKVDPNG. Pro residues predominate over residues 164-178; it reads SSPPTVAVPPPPPPS. N-linked (GlcNAc...) asparagine glycosylation is present at Asn-333. The region spanning 340 to 654 is the Peptidase S8 domain; sequence MWYLNRGGGL…YGLMDAAEMV (315 aa). Catalysis depends on charge relay system residues Asp-372 and His-413. Asn-426 is a glycosylation site (N-linked (GlcNAc...) asparagine). Disulfide bonds link Cys-430-Cys-579 and Cys-522-Cys-552. Ser-587 acts as the Charge relay system in catalysis. Asn-606 is a glycosylation site (N-linked (GlcNAc...) asparagine). Residues 662 to 793 enclose the P/Homo B domain; it reads AVPEQQRCEI…SLIFYGTTQS (132 aa). A disulfide bond links Cys-669 and Cys-695. N-linked (GlcNAc...) asparagine glycans are attached at residues Asn-727 and Asn-814. Disordered stretches follow at residues 796 to 875, 891 to 1015, 1031 to 1050, and 1057 to 1083; these read PNDP…PPKQ, ANGK…NSRI, ELEP…AKQG, and LFKP…PSQT. Low complexity-rich tracts occupy residues 811–821 and 835–851; these read TTPNSSSTTSN and PNNF…LPLG. Asn-857 carries an N-linked (GlcNAc...) asparagine glycan. A compositionally biased stretch (polar residues) spans 858–868; that stretch reads KSSYVTNNPLL. N-linked (GlcNAc...) asparagine glycosylation is found at Asn-897 and Asn-908. Low complexity-rich tracts occupy residues 905 to 915 and 929 to 940; these read NKGNKSNNGNK and TTQSTIIQTSTS. Over residues 975–985 the composition is skewed to basic and acidic residues; the sequence is KSYDEKSRKVV. N-linked (GlcNAc...) asparagine glycosylation occurs at Asn-994. Positions 1005–1014 are enriched in polar residues; sequence ESTTTSSNSR. Over residues 1062–1074 the composition is skewed to polar residues; it reads NGGNSRQGNTKKS. A helical membrane pass occupies residues 1233 to 1253; sequence LGLSLLFFMIMQVFFLNFKHA.

It belongs to the peptidase S8 family. Furin subfamily. Ca(2+) serves as cofactor. In adults, isoform 1-X is expressed in CNS, fat body and female reproductive tissues, and in embryos, in CNS, tracheal pits, hindgut, posterior spiracles and anal pads.

The protein localises to the golgi apparatus membrane. The enzyme catalyses Release of mature proteins from their proproteins by cleavage of -Arg-Xaa-Yaa-Arg-|-Zaa- bonds, where Xaa can be any amino acid and Yaa is Arg or Lys. Releases albumin, complement component C3 and von Willebrand factor from their respective precursors.. In terms of biological role, furin is likely to represent the ubiquitous endoprotease activity within constitutive secretory pathways and capable of cleavage at the RX(K/R)R consensus motif. The polypeptide is Furin-like protease 1, isoforms 1/1-X/2 (Fur1) (Drosophila melanogaster (Fruit fly)).